Consider the following 382-residue polypeptide: uncharacterized protein (382 aa).

12 helical membrane passes run 14–34, 45–65, 79–99, 102–122, 131–151, 157–177, 204–224, 236–256, 265–285, 289–309, 325–345, and 349–369; these read GLLL…LWLA, MVSS…GYLI, LVFA…SWMA, FVAG…LMCS, LLAA…LLVS, LMNV…PLLF, LGVN…GLMP, NIGF…WPIG, LLVL…MLTH, APAL…AMAW, ALLL…AMLM, and SDNL…LMLL.

Belongs to the major facilitator superfamily. YcaD (TC 2.A.1.26) family.

It localises to the cell inner membrane. This is an uncharacterized protein from Escherichia fergusonii (strain ATCC 35469 / DSM 13698 / CCUG 18766 / IAM 14443 / JCM 21226 / LMG 7866 / NBRC 102419 / NCTC 12128 / CDC 0568-73).